A 353-amino-acid polypeptide reads, in one-letter code: MCALRYLRPDLLHLKPYDAVPPQAADKLDANEFPWDWPVGFKQKLSLLWEKGIPSNRYPDAHHQGLKQAIAAYAGADPAQISLGNGSDELIRSLLIATCVGERGSVLVAEPTFSMYAILAQSLGIPVVRVPRHPETFALDLGRCQQAVAEQRVRVVCLVDPNSPTGNGLSTAEWEWVEGLPAEILVILDEAYFEFSQHTALPKLAEHPNWVILRTFSKAFRLAAHRVGYAIGHPQLIQVLDSIRLPYNLSAISQWAVQIALEHAEEFLADLPLIRQERDALYQALQELPGVRVWPSQANFLYFRVAGWDPQDLQRAWQELGTCVRCTGGGLRLTVGTPEENQRALERLRQILR.

At Lys-218 the chain carries N6-(pyridoxal phosphate)lysine.

Belongs to the class-II pyridoxal-phosphate-dependent aminotransferase family. Histidinol-phosphate aminotransferase subfamily. Homodimer. It depends on pyridoxal 5'-phosphate as a cofactor.

The enzyme catalyses L-histidinol phosphate + 2-oxoglutarate = 3-(imidazol-4-yl)-2-oxopropyl phosphate + L-glutamate. It functions in the pathway amino-acid biosynthesis; L-histidine biosynthesis; L-histidine from 5-phospho-alpha-D-ribose 1-diphosphate: step 7/9. This Synechococcus sp. (strain JA-3-3Ab) (Cyanobacteria bacterium Yellowstone A-Prime) protein is Histidinol-phosphate aminotransferase.